A 639-amino-acid chain; its full sequence is 2-oxoacid:ferredoxin oxidoreductase 1, subunit alpha (639 aa).

The short motif at 266–270 (YPITP) is the YPITP motif element. Substrate is bound by residues T269 and R352.

Heterodimer composed of an alpha and a beta subunit.

The catalysed reaction is a 2-oxocarboxylate + 2 oxidized [2Fe-2S]-[ferredoxin] + CoA = an acyl-CoA + 2 reduced [2Fe-2S]-[ferredoxin] + CO2 + H(+). In terms of biological role, catalyzes the coenzyme A-dependent oxidative decarboxylation of different 2-oxoacids such as pyruvate, 2-oxobutyrate and glyoxylate to form their CoA derivatives. This chain is 2-oxoacid:ferredoxin oxidoreductase 1, subunit alpha, found in Aeropyrum pernix (strain ATCC 700893 / DSM 11879 / JCM 9820 / NBRC 100138 / K1).